The primary structure comprises 432 residues: Adenylosuccinate synthetase (432 aa).

GTP is bound by residues 13–19 (GDEGKGK) and 41–43 (GHT). Asp-14 serves as the catalytic Proton acceptor. Residues Asp-14 and Gly-41 each contribute to the Mg(2+) site. IMP-binding positions include 14-17 (DEGK), 39-42 (NAGH), Thr-130, Arg-144, Gln-225, Thr-240, and Arg-304. The active-site Proton donor is His-42. Substrate is bound at residue 300–306 (ATTGRRR). GTP-binding positions include Arg-306, 332–334 (KLD), and 415–417 (STG).

The protein belongs to the adenylosuccinate synthetase family. Homodimer. Requires Mg(2+) as cofactor.

It localises to the cytoplasm. It carries out the reaction IMP + L-aspartate + GTP = N(6)-(1,2-dicarboxyethyl)-AMP + GDP + phosphate + 2 H(+). It participates in purine metabolism; AMP biosynthesis via de novo pathway; AMP from IMP: step 1/2. In terms of biological role, plays an important role in the de novo pathway of purine nucleotide biosynthesis. Catalyzes the first committed step in the biosynthesis of AMP from IMP. The polypeptide is Adenylosuccinate synthetase (Klebsiella pneumoniae (strain 342)).